The primary structure comprises 494 residues: Guanosine-5'-triphosphate,3'-diphosphate pyrophosphatase (494 aa).

The protein belongs to the GppA/Ppx family. GppA subfamily.

It catalyses the reaction guanosine 3'-diphosphate 5'-triphosphate + H2O = guanosine 3',5'-bis(diphosphate) + phosphate + H(+). It functions in the pathway purine metabolism; ppGpp biosynthesis; ppGpp from GTP: step 2/2. In terms of biological role, catalyzes the conversion of pppGpp to ppGpp. Guanosine pentaphosphate (pppGpp) is a cytoplasmic signaling molecule which together with ppGpp controls the 'stringent response', an adaptive process that allows bacteria to respond to amino acid starvation, resulting in the coordinated regulation of numerous cellular activities. This chain is Guanosine-5'-triphosphate,3'-diphosphate pyrophosphatase, found in Escherichia fergusonii (strain ATCC 35469 / DSM 13698 / CCUG 18766 / IAM 14443 / JCM 21226 / LMG 7866 / NBRC 102419 / NCTC 12128 / CDC 0568-73).